The sequence spans 86 residues: Large ribosomal subunit protein uL30m (86 aa).

The tract at residues 67–86 is disordered; the sequence is QQRELRKSNPGFIVEKRTID.

It belongs to the universal ribosomal protein uL30 family. In terms of assembly, component of the mitochondrial large ribosomal subunit (mt-LSU). Mature yeast 74S mitochondrial ribosomes consist of a small (37S) and a large (54S) subunit. The 37S small subunit contains a 15S ribosomal RNA (15S mt-rRNA) and 34 different proteins. The 54S large subunit contains a 21S rRNA (21S mt-rRNA) and 46 different proteins.

Its subcellular location is the mitochondrion. Functionally, component of the mitochondrial ribosome (mitoribosome), a dedicated translation machinery responsible for the synthesis of mitochondrial genome-encoded proteins, including at least some of the essential transmembrane subunits of the mitochondrial respiratory chain. The mitoribosomes are attached to the mitochondrial inner membrane and translation products are cotranslationally integrated into the membrane. This is Large ribosomal subunit protein uL30m (MRPL33) from Saccharomyces cerevisiae (strain ATCC 204508 / S288c) (Baker's yeast).